A 180-amino-acid chain; its full sequence is GTP cyclohydrolase 1 (180 aa).

Cysteine 71, histidine 74, and cysteine 142 together coordinate Zn(2+).

It belongs to the GTP cyclohydrolase I family. In terms of assembly, homomer.

It catalyses the reaction GTP + H2O = 7,8-dihydroneopterin 3'-triphosphate + formate + H(+). The protein operates within cofactor biosynthesis; 7,8-dihydroneopterin triphosphate biosynthesis; 7,8-dihydroneopterin triphosphate from GTP: step 1/1. The sequence is that of GTP cyclohydrolase 1 from Helicobacter pylori (strain G27).